The primary structure comprises 155 residues: Protein-export protein SecB (155 aa).

Belongs to the SecB family. As to quaternary structure, homotetramer, a dimer of dimers. One homotetramer interacts with 1 SecA dimer.

Its subcellular location is the cytoplasm. In terms of biological role, one of the proteins required for the normal export of preproteins out of the cell cytoplasm. It is a molecular chaperone that binds to a subset of precursor proteins, maintaining them in a translocation-competent state. It also specifically binds to its receptor SecA. The polypeptide is Protein-export protein SecB (Albidiferax ferrireducens (strain ATCC BAA-621 / DSM 15236 / T118) (Rhodoferax ferrireducens)).